The primary structure comprises 306 residues: Choline-binding protein (306 aa).

The signal sequence occupies residues 1 to 22 (MKRKYLKLMIGLALAATLTLSG). Cys-23 carries N-palmitoyl cysteine lipidation. A lipid anchor (S-diacylglycerol cysteine) is attached at Cys-23.

This sequence belongs to the OsmX family.

It is found in the cell membrane. Functionally, member of a high affinity multicomponent binding-protein-dependent transport system for choline. The protein is Choline-binding protein (opuBC) of Bacillus subtilis (strain 168).